Here is a 218-residue protein sequence, read N- to C-terminus: Flagellar calcium-binding protein TB-24 (218 aa).

The tract at residues 1 to 27 (MGCSASKDTTNSKDGAASKGGKDGKTT) is disordered. EF-hand domains are found at residues 48-83 (ESKS…ILKL), 84-119 (DEFT…LVEF), 130-165 (YDIF…LKEW), and 167-202 (VDIT…KKLQ). Aspartate 61, asparagine 63, threonine 65, lysine 67, and glutamate 72 together coordinate Ca(2+). Ca(2+) is bound by residues aspartate 143, aspartate 145, serine 147, glutamate 154, aspartate 180, asparagine 182, serine 184, and glutamate 191.

This sequence belongs to the calflagin family.

It is found in the cell projection. It localises to the cilium. The protein localises to the flagellum. Functionally, may contribute to the rapid motility of the trypanosomes, playing a role either in flagellar structure or in calcium metabolism. Could alternate between a GDP-bound inactive form to a calcium/GTP-bound active form. In Trypanosoma brucei brucei, this protein is Flagellar calcium-binding protein TB-24.